A 78-amino-acid chain; its full sequence is Large ribosomal subunit protein bL28 (78 aa).

This sequence belongs to the bacterial ribosomal protein bL28 family.

The sequence is that of Large ribosomal subunit protein bL28 from Prochlorococcus marinus (strain MIT 9312).